A 262-amino-acid chain; its full sequence is 14-3-3 protein homolog (262 aa).

It belongs to the 14-3-3 family.

This is 14-3-3 protein homolog from Trichoderma harzianum (Hypocrea lixii).